Consider the following 157-residue polypeptide: Large ribosomal subunit protein eL29 (157 aa).

Residues 1-26 (MAKSKNHTTHNQSRKWHRNGIKKPRS) show a composition bias toward basic residues. The tract at residues 1–32 (MAKSKNHTTHNQSRKWHRNGIKKPRSQRYESL) is disordered. Lys-5 carries the N6-methyllysine modification. At Ser-31 the chain carries Phosphoserine. Residue Lys-33 is modified to N6-acetyllysine. The interval 121 to 157 (PKAKAKAKDQTKAQAAAPASIPAQAPKGAQATTKATE) is disordered. A compositionally biased stretch (low complexity) spans 132-147 (KAQAAAPASIPAQAPK). The residue at position 140 (Ser-140) is a Phosphoserine.

Belongs to the eukaryotic ribosomal protein eL29 family. As to quaternary structure, component of the large ribosomal subunit.

The protein localises to the cytoplasm. Functionally, component of the large ribosomal subunit. The ribosome is a large ribonucleoprotein complex responsible for the synthesis of proteins in the cell. This is Large ribosomal subunit protein eL29 (RPL29) from Macaca fascicularis (Crab-eating macaque).